Consider the following 162-residue polypeptide: 6,7-dimethyl-8-ribityllumazine synthase (162 aa).

5-amino-6-(D-ribitylamino)uracil contacts are provided by residues Phe22, Thr56–Glu58, and Ala80–Ile82. Gly85–Thr86 lines the (2S)-2-hydroxy-3-oxobutyl phosphate pocket. Residue His88 is the Proton donor of the active site. Position 113 (Met113) interacts with 5-amino-6-(D-ribitylamino)uracil. Arg127 contacts (2S)-2-hydroxy-3-oxobutyl phosphate.

Belongs to the DMRL synthase family.

It carries out the reaction (2S)-2-hydroxy-3-oxobutyl phosphate + 5-amino-6-(D-ribitylamino)uracil = 6,7-dimethyl-8-(1-D-ribityl)lumazine + phosphate + 2 H2O + H(+). It functions in the pathway cofactor biosynthesis; riboflavin biosynthesis; riboflavin from 2-hydroxy-3-oxobutyl phosphate and 5-amino-6-(D-ribitylamino)uracil: step 1/2. Its function is as follows. Catalyzes the formation of 6,7-dimethyl-8-ribityllumazine by condensation of 5-amino-6-(D-ribitylamino)uracil with 3,4-dihydroxy-2-butanone 4-phosphate. This is the penultimate step in the biosynthesis of riboflavin. The sequence is that of 6,7-dimethyl-8-ribityllumazine synthase from Anaeromyxobacter dehalogenans (strain 2CP-C).